The primary structure comprises 454 residues: Protection of telomeres protein 1b (454 aa).

Belongs to the telombin family. In terms of assembly, interacts with TRB1, TRB2 and TRB3. As to expression, expressed at low levels in roots, rosette leaves, cauline leaves, stems and flowers.

The protein resides in the nucleus. Its subcellular location is the chromosome. The protein localises to the telomere. In terms of biological role, negatively regulates telomerase activity and participates in chromosome end protection. Binds RNA non-specifically. Associates with a regulatory Pol III-dependent lncRNA, which represses telomerase activity in response to DNA damage. Binds single-stranded telomeric DNA with weak affinity. The sequence is that of Protection of telomeres protein 1b from Arabidopsis thaliana (Mouse-ear cress).